Here is a 20-residue protein sequence, read N- to C-terminus: Short cationic peptide-6a (20 aa).

Ser20 carries the post-translational modification Serine amide.

Expressed by the venom gland.

The protein resides in the secreted. This Cupiennius salei (American wandering spider) protein is Short cationic peptide-6a.